The sequence spans 393 residues: Elongation factor Tu (393 aa).

The 194-residue stretch at 10–203 folds into the tr-type G domain; that stretch reads KPHVNIGTIG…AVDNYIPTPV (194 aa). Positions 19-26 are G1; the sequence is GHVDHGKT. Position 19 to 26 (19 to 26) interacts with GTP; the sequence is GHVDHGKT. Thr-26 is a binding site for Mg(2+). Residues 60–64 are G2; sequence GITIS. Residues 81–84 are G3; it reads DCPG. GTP is bound by residues 81–85 and 136–139; these read DCPGH and NKVD. Positions 136-139 are G4; the sequence is NKVD. Positions 173–175 are G5; that stretch reads SAL.

It belongs to the TRAFAC class translation factor GTPase superfamily. Classic translation factor GTPase family. EF-Tu/EF-1A subfamily. In terms of assembly, monomer.

The protein resides in the cytoplasm. The catalysed reaction is GTP + H2O = GDP + phosphate + H(+). In terms of biological role, GTP hydrolase that promotes the GTP-dependent binding of aminoacyl-tRNA to the A-site of ribosomes during protein biosynthesis. The sequence is that of Elongation factor Tu from Chloroherpeton thalassium (strain ATCC 35110 / GB-78).